The chain runs to 290 residues: Thymidylate synthase (290 aa).

Arginine 31 contacts dUMP. Histidine 61 serves as a coordination point for (6R)-5,10-methylene-5,6,7,8-tetrahydrofolate. Residue arginine 152–arginine 153 participates in dUMP binding. The Nucleophile role is filled by cysteine 172. DUMP-binding positions include arginine 192–aspartate 195, asparagine 203, and histidine 233–tyrosine 235. Aspartate 195 lines the (6R)-5,10-methylene-5,6,7,8-tetrahydrofolate pocket. Alanine 289 serves as a coordination point for (6R)-5,10-methylene-5,6,7,8-tetrahydrofolate.

The protein belongs to the thymidylate synthase family. Bacterial-type ThyA subfamily. Homodimer.

It localises to the cytoplasm. The enzyme catalyses dUMP + (6R)-5,10-methylene-5,6,7,8-tetrahydrofolate = 7,8-dihydrofolate + dTMP. Its pathway is pyrimidine metabolism; dTTP biosynthesis. Catalyzes the reductive methylation of 2'-deoxyuridine-5'-monophosphate (dUMP) to 2'-deoxythymidine-5'-monophosphate (dTMP) while utilizing 5,10-methylenetetrahydrofolate (mTHF) as the methyl donor and reductant in the reaction, yielding dihydrofolate (DHF) as a by-product. This enzymatic reaction provides an intracellular de novo source of dTMP, an essential precursor for DNA biosynthesis. This is Thymidylate synthase from Psychrobacter cryohalolentis (strain ATCC BAA-1226 / DSM 17306 / VKM B-2378 / K5).